Reading from the N-terminus, the 431-residue chain is Phosphoribosylamine--glycine ligase (431 aa).

An ATP-grasp domain is found at Lys-109–Asp-316. Val-135–Ser-196 is an ATP binding site. Positions 286 and 288 each coordinate Mg(2+).

Belongs to the GARS family. The cofactor is Mg(2+). It depends on Mn(2+) as a cofactor.

The enzyme catalyses 5-phospho-beta-D-ribosylamine + glycine + ATP = N(1)-(5-phospho-beta-D-ribosyl)glycinamide + ADP + phosphate + H(+). Its pathway is purine metabolism; IMP biosynthesis via de novo pathway; N(1)-(5-phospho-D-ribosyl)glycinamide from 5-phospho-alpha-D-ribose 1-diphosphate: step 2/2. The polypeptide is Phosphoribosylamine--glycine ligase (Xanthomonas axonopodis pv. citri (strain 306)).